A 304-amino-acid chain; its full sequence is MGAINQGISLFDESQTVINPINTNHLGFFFSFPSHSTLSSSSSSSSSSPSSLVSPFLGHNSLNSFLHNNPSSFISHPQDSINLMTNLPETLISSLSSSKQRDDHDGFLNLDHHRLTGSISSQRPLSNPWAWSCQAGYGSSQKNNHGSEIDVDDNDDEVGDGGGINDDDNGRHHHHDTPSRHDKHNTASLGVVSSLKMKKLKTRRKVREPRFCFKTLSEVDVLDDGYRWRKYGQKVVKNTQHPRSYYRCTQDKCRVKKRVERLADDPRMVITTYEGRHLHSPSNHLDDDSLSTSHLHPPLSNFFW.

The interval 141–190 (QKNNHGSEIDVDDNDDEVGDGGGINDDDNGRHHHHDTPSRHDKHNTASLG) is disordered. A compositionally biased stretch (acidic residues) spans 149-159 (IDVDDNDDEVG). The segment at residues 217-282 (SEVDVLDDGY…YEGRHLHSPS (66 aa)) is a DNA-binding region (WRKY).

This sequence belongs to the WRKY group II-c family.

It is found in the nucleus. In terms of biological role, transcription factor. Interacts specifically with the W box (5'-(T)TGAC[CT]-3'), a frequently occurring elicitor-responsive cis-acting element. This chain is Probable WRKY transcription factor 13 (WRKY13), found in Arabidopsis thaliana (Mouse-ear cress).